Here is a 475-residue protein sequence, read N- to C-terminus: Chromosomal replication initiator protein DnaA (475 aa).

Positions M1–A71 are domain I, interacts with DnaA modulators. Positions A71 to A133 are domain II. A compositionally biased stretch (low complexity) spans A107–P127. The interval A107–E129 is disordered. Positions K134–A355 are domain III, AAA+ region. The ATP site is built by G178, G180, K181, and T182. Residues D356–A475 form a domain IV, binds dsDNA region.

Belongs to the DnaA family. As to quaternary structure, oligomerizes as a right-handed, spiral filament on DNA at oriC.

The protein localises to the cytoplasm. In terms of biological role, plays an essential role in the initiation and regulation of chromosomal replication. ATP-DnaA binds to the origin of replication (oriC) to initiate formation of the DNA replication initiation complex once per cell cycle. Binds the DnaA box (a 9 base pair repeat at the origin) and separates the double-stranded (ds)DNA. Forms a right-handed helical filament on oriC DNA; dsDNA binds to the exterior of the filament while single-stranded (ss)DNA is stabiized in the filament's interior. The ATP-DnaA-oriC complex binds and stabilizes one strand of the AT-rich DNA unwinding element (DUE), permitting loading of DNA polymerase. After initiation quickly degrades to an ADP-DnaA complex that is not apt for DNA replication. Binds acidic phospholipids. This chain is Chromosomal replication initiator protein DnaA, found in Jannaschia sp. (strain CCS1).